Reading from the N-terminus, the 228-residue chain is Ribulose-phosphate 3-epimerase (228 aa).

Serine 12 provides a ligand contact to substrate. A divalent metal cation-binding residues include histidine 37, aspartate 39, and histidine 70. The active-site Proton acceptor is the aspartate 39. Substrate contacts are provided by residues histidine 70, 146-149, 176-178, and 198-199; these read GFGG, DGG, and GS. Aspartate 176 provides a ligand contact to a divalent metal cation. The Proton donor role is filled by aspartate 176.

Belongs to the ribulose-phosphate 3-epimerase family. The cofactor is a divalent metal cation.

The enzyme catalyses D-ribulose 5-phosphate = D-xylulose 5-phosphate. It participates in carbohydrate degradation. Catalyzes the reversible epimerization of D-ribulose 5-phosphate to D-xylulose 5-phosphate. The protein is Ribulose-phosphate 3-epimerase of Rhodobacter capsulatus (Rhodopseudomonas capsulata).